Here is a 438-residue protein sequence, read N- to C-terminus: Lipid-A-disaccharide synthase (438 aa).

Belongs to the LpxB family.

The enzyme catalyses a lipid X + a UDP-2-N,3-O-bis[(3R)-3-hydroxyacyl]-alpha-D-glucosamine = a lipid A disaccharide + UDP + H(+). It functions in the pathway bacterial outer membrane biogenesis; LPS lipid A biosynthesis. In terms of biological role, condensation of UDP-2,3-diacylglucosamine and 2,3-diacylglucosamine-1-phosphate to form lipid A disaccharide, a precursor of lipid A, a phosphorylated glycolipid that anchors the lipopolysaccharide to the outer membrane of the cell. The sequence is that of Lipid-A-disaccharide synthase from Xanthomonas campestris pv. campestris (strain 8004).